We begin with the raw amino-acid sequence, 365 residues long: UDP-N-acetylglucosamine--N-acetylmuramyl-(pentapeptide) pyrophosphoryl-undecaprenol N-acetylglucosamine transferase (365 aa).

UDP-N-acetyl-alpha-D-glucosamine-binding positions include 17–19, N129, R167, S194, I250, 269–274, and Q295; these read TGG and ALTVSE.

It belongs to the glycosyltransferase 28 family. MurG subfamily.

The protein resides in the cell inner membrane. It catalyses the reaction di-trans,octa-cis-undecaprenyl diphospho-N-acetyl-alpha-D-muramoyl-L-alanyl-D-glutamyl-meso-2,6-diaminopimeloyl-D-alanyl-D-alanine + UDP-N-acetyl-alpha-D-glucosamine = di-trans,octa-cis-undecaprenyl diphospho-[N-acetyl-alpha-D-glucosaminyl-(1-&gt;4)]-N-acetyl-alpha-D-muramoyl-L-alanyl-D-glutamyl-meso-2,6-diaminopimeloyl-D-alanyl-D-alanine + UDP + H(+). The protein operates within cell wall biogenesis; peptidoglycan biosynthesis. Cell wall formation. Catalyzes the transfer of a GlcNAc subunit on undecaprenyl-pyrophosphoryl-MurNAc-pentapeptide (lipid intermediate I) to form undecaprenyl-pyrophosphoryl-MurNAc-(pentapeptide)GlcNAc (lipid intermediate II). This is UDP-N-acetylglucosamine--N-acetylmuramyl-(pentapeptide) pyrophosphoryl-undecaprenol N-acetylglucosamine transferase from Shewanella halifaxensis (strain HAW-EB4).